The primary structure comprises 1160 residues: Major DNA-binding protein (1160 aa).

The Required for filament formation signature appears at 808-809 (FW). The tract at residues 1139–1160 (ARGGEHAFDEDCGLLPAKRGRL) is required for nuclear localization.

Belongs to the herpesviridae major DNA-binding protein family. As to quaternary structure, homooligomers. Forms double-helical filaments necessary for the formation of replication compartments within the host nucleus. Interacts with the origin-binding protein. Interacts with the helicase primase complex; this interaction stimulates primer synthesis activity of the helicase-primase complex. Interacts with the DNA polymerase. Interacts with the alkaline exonuclease; this interaction increases its nuclease processivity.

It localises to the host nucleus. In terms of biological role, single-stranded DNA-binding protein required for DNA replication. Functionally, plays several crucial roles in viral infection. Participates in the opening of the viral DNA origin to initiate replication by interacting with the origin-binding protein. May disrupt loops, hairpins and other secondary structures present on ssDNA to reduce and eliminate pausing of viral DNA polymerase at specific sites during elongation. Promotes viral DNA recombination by performing strand-transfer, characterized by the ability to transfer a DNA strand from a linear duplex to a complementary single-stranded DNA circle. Can also catalyze the renaturation of complementary single strands. Additionally, reorganizes the host cell nucleus, leading to the formation of prereplicative sites and replication compartments. This process is driven by the protein which can form double-helical filaments in the absence of DNA. The polypeptide is Major DNA-binding protein (Simian cytomegalovirus (strain Colburn)).